We begin with the raw amino-acid sequence, 485 residues long: Ribulose bisphosphate carboxylase large chain (485 aa).

Residues 1–2 (MS) constitute a propeptide that is removed on maturation. Pro3 carries the post-translational modification N-acetylproline. The residue at position 14 (Lys14) is an N6,N6,N6-trimethyllysine. 2 residues coordinate substrate: Asn123 and Thr173. Lys175 (proton acceptor) is an active-site residue. Substrate is bound at residue Lys177. The Mg(2+) site is built by Lys201, Asp203, and Glu204. An N6-carboxylysine modification is found at Lys201. The active-site Proton acceptor is the His294. Substrate-binding residues include Arg295, His327, and Ser379.

Belongs to the RuBisCO large chain family. Type I subfamily. In terms of assembly, heterohexadecamer of 8 large chains and 8 small chains; disulfide-linked. The disulfide link is formed within the large subunit homodimers. The cofactor is Mg(2+). In terms of processing, the disulfide bond which can form in the large chain dimeric partners within the hexadecamer appears to be associated with oxidative stress and protein turnover.

The protein localises to the plastid. Its subcellular location is the chloroplast. The catalysed reaction is 2 (2R)-3-phosphoglycerate + 2 H(+) = D-ribulose 1,5-bisphosphate + CO2 + H2O. It carries out the reaction D-ribulose 1,5-bisphosphate + O2 = 2-phosphoglycolate + (2R)-3-phosphoglycerate + 2 H(+). Functionally, ruBisCO catalyzes two reactions: the carboxylation of D-ribulose 1,5-bisphosphate, the primary event in carbon dioxide fixation, as well as the oxidative fragmentation of the pentose substrate in the photorespiration process. Both reactions occur simultaneously and in competition at the same active site. This chain is Ribulose bisphosphate carboxylase large chain, found in Flaveria bidentis (Coastal plain yellowtops).